A 308-amino-acid polypeptide reads, in one-letter code: Ribosomal protein L11 methyltransferase (308 aa).

Residues T157, G178, D200, and N243 each coordinate S-adenosyl-L-methionine.

It belongs to the methyltransferase superfamily. PrmA family.

It localises to the cytoplasm. The enzyme catalyses L-lysyl-[protein] + 3 S-adenosyl-L-methionine = N(6),N(6),N(6)-trimethyl-L-lysyl-[protein] + 3 S-adenosyl-L-homocysteine + 3 H(+). Functionally, methylates ribosomal protein L11. The chain is Ribosomal protein L11 methyltransferase from Pelotomaculum thermopropionicum (strain DSM 13744 / JCM 10971 / SI).